We begin with the raw amino-acid sequence, 326 residues long: Biotin synthase (326 aa).

Residues 47 to 274 (NEVQVSSLLS…ASRVRLSAGR (228 aa)) enclose the Radical SAM core domain. Cys62, Cys66, and Cys69 together coordinate [4Fe-4S] cluster. The [2Fe-2S] cluster site is built by Cys106, Cys137, Cys197, and Arg269.

Belongs to the radical SAM superfamily. Biotin synthase family. Homodimer. Requires [4Fe-4S] cluster as cofactor. The cofactor is [2Fe-2S] cluster.

The enzyme catalyses (4R,5S)-dethiobiotin + (sulfur carrier)-SH + 2 reduced [2Fe-2S]-[ferredoxin] + 2 S-adenosyl-L-methionine = (sulfur carrier)-H + biotin + 2 5'-deoxyadenosine + 2 L-methionine + 2 oxidized [2Fe-2S]-[ferredoxin]. The protein operates within cofactor biosynthesis; biotin biosynthesis; biotin from 7,8-diaminononanoate: step 2/2. Its function is as follows. Catalyzes the conversion of dethiobiotin (DTB) to biotin by the insertion of a sulfur atom into dethiobiotin via a radical-based mechanism. The protein is Biotin synthase of Methylococcus capsulatus (strain ATCC 33009 / NCIMB 11132 / Bath).